The sequence spans 808 residues: Protein SEY1 (808 aa).

A disordered region spans residues Met1–Pro21. The Cytoplasmic portion of the chain corresponds to Met1–Gln701. A GB1/RHD3-type G domain is found at Gly57–Tyr286. Gly67–Ser74 lines the GTP pocket. A helical membrane pass occupies residues Ile702–Ile722. Residues Arg723–Pro725 are Lumenal-facing. A helical transmembrane segment spans residues Leu726–Leu746. Residues Leu747 to Met808 lie on the Cytoplasmic side of the membrane.

Belongs to the TRAFAC class dynamin-like GTPase superfamily. GB1/RHD3 GTPase family. RHD3 subfamily.

The protein resides in the endoplasmic reticulum membrane. Its function is as follows. Cooperates with the reticulon proteins and tubule-shaping DP1 family proteins to generate and maintain the structure of the tubular endoplasmic reticulum network. Has GTPase activity, which is required for its function in ER organization. The chain is Protein SEY1 from Candida tropicalis (strain ATCC MYA-3404 / T1) (Yeast).